The primary structure comprises 269 residues: Pyrroline-5-carboxylate reductase (269 aa).

This sequence belongs to the pyrroline-5-carboxylate reductase family.

The protein resides in the cytoplasm. The catalysed reaction is L-proline + NADP(+) = (S)-1-pyrroline-5-carboxylate + NADPH + 2 H(+). The enzyme catalyses L-proline + NAD(+) = (S)-1-pyrroline-5-carboxylate + NADH + 2 H(+). The protein operates within amino-acid biosynthesis; L-proline biosynthesis; L-proline from L-glutamate 5-semialdehyde: step 1/1. Its activity is regulated as follows. Inhibited by p-chloromercuribenzoate. In terms of biological role, catalyzes the reduction of 1-pyrroline-5-carboxylate (PCA) to L-proline. Does not catalyze the reverse reaction. In Escherichia coli (strain K12), this protein is Pyrroline-5-carboxylate reductase.